Here is a 207-residue protein sequence, read N- to C-terminus: Large ribosomal subunit protein uL4 (207 aa).

Positions 43 to 85 (SRRQGTHDTKGRSEVRGGGRKPWKQKGTGRARQGSIRSPQWVG) are disordered. Residues 47–59 (GTHDTKGRSEVRG) are compositionally biased toward basic and acidic residues. Over residues 60 to 71 (GGRKPWKQKGTG) the composition is skewed to basic residues.

This sequence belongs to the universal ribosomal protein uL4 family. As to quaternary structure, part of the 50S ribosomal subunit.

Functionally, one of the primary rRNA binding proteins, this protein initially binds near the 5'-end of the 23S rRNA. It is important during the early stages of 50S assembly. It makes multiple contacts with different domains of the 23S rRNA in the assembled 50S subunit and ribosome. Its function is as follows. Forms part of the polypeptide exit tunnel. This is Large ribosomal subunit protein uL4 from Exiguobacterium sibiricum (strain DSM 17290 / CCUG 55495 / CIP 109462 / JCM 13490 / 255-15).